Consider the following 483-residue polypeptide: tRNA-2-methylthio-N(6)-dimethylallyladenosine synthase (483 aa).

The 118-residue stretch at 31-148 (KKLYIETQGC…LPQMLDQHQD (118 aa)) folds into the MTTase N-terminal domain. Residues Cys40, Cys77, Cys111, Cys192, Cys196, and Cys199 each coordinate [4Fe-4S] cluster. A Radical SAM core domain is found at 178-410 (RVEGFKAFVS…QHWIKQSSIR (233 aa)). In terms of domain architecture, TRAM spans 413-477 (DAMQGTIQRV…LNLVYGELLN (65 aa)).

The protein belongs to the methylthiotransferase family. MiaB subfamily. Monomer. [4Fe-4S] cluster is required as a cofactor.

It is found in the cytoplasm. The catalysed reaction is N(6)-dimethylallyladenosine(37) in tRNA + (sulfur carrier)-SH + AH2 + 2 S-adenosyl-L-methionine = 2-methylsulfanyl-N(6)-dimethylallyladenosine(37) in tRNA + (sulfur carrier)-H + 5'-deoxyadenosine + L-methionine + A + S-adenosyl-L-homocysteine + 2 H(+). Catalyzes the methylthiolation of N6-(dimethylallyl)adenosine (i(6)A), leading to the formation of 2-methylthio-N6-(dimethylallyl)adenosine (ms(2)i(6)A) at position 37 in tRNAs that read codons beginning with uridine. This Acinetobacter baylyi (strain ATCC 33305 / BD413 / ADP1) protein is tRNA-2-methylthio-N(6)-dimethylallyladenosine synthase.